Reading from the N-terminus, the 356-residue chain is NADH-quinone oxidoreductase subunit H (356 aa).

The next 9 helical transmembrane spans lie at 22-42, 59-79, 93-113, 124-144, 171-191, 198-218, 240-260, 285-305, and 321-341; these read GVVS…TAYL, PSLA…KLVF, FIIA…VIPI, IGGI…IIIA, MALS…IQIV, PIWL…SILA, VEYS…NMIL, IPGY…FLWI, and GLKV…TILV.

Belongs to the complex I subunit 1 family. NDH-1 is composed of 14 different subunits. Subunits NuoA, H, J, K, L, M, N constitute the membrane sector of the complex.

The protein resides in the cell inner membrane. It catalyses the reaction a quinone + NADH + 5 H(+)(in) = a quinol + NAD(+) + 4 H(+)(out). NDH-1 shuttles electrons from NADH, via FMN and iron-sulfur (Fe-S) centers, to quinones in the respiratory chain. The immediate electron acceptor for the enzyme in this species is believed to be ubiquinone. Couples the redox reaction to proton translocation (for every two electrons transferred, four hydrogen ions are translocated across the cytoplasmic membrane), and thus conserves the redox energy in a proton gradient. This subunit may bind ubiquinone. The sequence is that of NADH-quinone oxidoreductase subunit H from Orientia tsutsugamushi (strain Boryong) (Rickettsia tsutsugamushi).